We begin with the raw amino-acid sequence, 447 residues long: Elongation factor 1-alpha (447 aa).

Residues 5–230 (KIHISIVVIG…DQINEPKRPS (226 aa)) form the tr-type G domain. The segment at 14–21 (GHVDSGKS) is G1. 14–21 (GHVDSGKS) is a binding site for GTP. At lysine 55 the chain carries N6,N6-dimethyllysine. Residues 70 to 74 (GITID) are G2. Lysine 79 carries the post-translational modification N6,N6,N6-trimethyllysine. Residues 91–94 (DAPG) are G3. GTP-binding positions include 91–95 (DAPGH) and 153–156 (NKMD). A G4 region spans residues 153–156 (NKMD). Position 187 is an N6,N6,N6-trimethyllysine (lysine 187). Residues 194–196 (SGF) form a G5 region. Lysine 261 bears the N6-methyllysine mark. 5-glutamyl glycerylphosphorylethanolamine is present on glutamate 289. Residue lysine 306 is modified to N6,N6,N6-trimethyllysine. Glutamate 362 bears the 5-glutamyl glycerylphosphorylethanolamine mark. At lysine 396 the chain carries N6,N6,N6-trimethyllysine.

This sequence belongs to the TRAFAC class translation factor GTPase superfamily. Classic translation factor GTPase family. EF-Tu/EF-1A subfamily.

It localises to the cytoplasm. In terms of biological role, this protein promotes the GTP-dependent binding of aminoacyl-tRNA to the A-site of ribosomes during protein biosynthesis. The protein is Elongation factor 1-alpha of Hordeum vulgare (Barley).